The sequence spans 76 residues: Conotoxin Cal5a L1 (76 aa).

The first 22 residues, 1 to 22, serve as a signal peptide directing secretion; that stretch reads MRFYIGLMAALMLTSILRTDSA. The propeptide occupies 23 to 42; sequence SVDQTGAEGGLALIERVIRQ. Pro-50 carries the post-translational modification 4-hydroxyproline. 4-hydroxyproline; in form cal5a, and form cal5b is present on Pro-58. Pro-62 carries the post-translational modification 4-hydroxyproline; in form cal5a, form cal5b, and form cal5c. 4-hydroxyproline; in form cal5a, form cal5b, form cal5c, and form cal5d is present on Pro-64.

Contains 2 disulfide bonds that can be either 'C1-C3, C2-C4' or 'C1-C4, C2-C3', since these disulfide connectivities have been observed for conotoxins with cysteine framework V (for examples, see AC P0DQQ7 and AC P81755). In terms of processing, five different peptides have been described after total venom examination by HPLC-MS. Cal5a is the longest. Cal5b-Cal5e are identical in length but are differentially hydroxylated. It is possible that hydroxylation and proteolysis at position 53 are incomplete in some of these peptides. In terms of tissue distribution, expressed by the venom duct.

Its subcellular location is the secreted. Functionally, probable neurotoxin with unknown target. Possibly targets ion channels. This Californiconus californicus (California cone) protein is Conotoxin Cal5a L1.